The primary structure comprises 74 residues: MTSEFFAKILIILIRLYQILISPLFAPCCRFYPSCSEYAIIAVRKHGLSKGSRLALIRLFKCHPFHPGGYDPVR.

Belongs to the UPF0161 family.

The protein resides in the cell inner membrane. In terms of biological role, could be involved in insertion of integral membrane proteins into the membrane. The chain is Putative membrane protein insertion efficiency factor from Syntrophus aciditrophicus (strain SB).